The following is a 158-amino-acid chain: Putative peptidoglycan-binding-like protein (158 aa).

The N-terminal stretch at 1 to 24 (MRSPKVKFLTIFTFCIFITKMSFA) is a signal peptide.

This sequence belongs to the IagB/IpgF/P19 family.

The protein resides in the periplasm. This Escherichia coli (strain K12) protein is Putative peptidoglycan-binding-like protein (pbl).